Consider the following 243-residue polypeptide: Orotidine 5'-phosphate decarboxylase (243 aa).

Residues aspartate 19, lysine 41, aspartate 69–threonine 78, threonine 124, arginine 185, glutamine 194, glycine 214, and arginine 215 contribute to the substrate site. Lysine 71 (proton donor) is an active-site residue.

Belongs to the OMP decarboxylase family. Type 1 subfamily. In terms of assembly, homodimer.

The catalysed reaction is orotidine 5'-phosphate + H(+) = UMP + CO2. The protein operates within pyrimidine metabolism; UMP biosynthesis via de novo pathway; UMP from orotate: step 2/2. In terms of biological role, catalyzes the decarboxylation of orotidine 5'-monophosphate (OMP) to uridine 5'-monophosphate (UMP). The polypeptide is Orotidine 5'-phosphate decarboxylase (Xanthomonas oryzae pv. oryzae (strain MAFF 311018)).